A 243-amino-acid chain; its full sequence is GrpE protein homolog, mitochondrial (243 aa).

A disordered region spans residues 56 to 79 (KKEEPKDENDAAAAEEDANLTEEQ).

This sequence belongs to the GrpE family. Component of the PAM complex, at least composed of mtHsp70, MGE1, TIM44, PAM16, PAM17 and PAM18.

It localises to the mitochondrion matrix. Its function is as follows. Essential component of the PAM complex, a complex required for the translocation of transit peptide-containing proteins from the inner membrane into the mitochondrial matrix in an ATP-dependent manner. Seems to control the nucleotide-dependent binding of SSC1 to substrate proteins. The sequence is that of GrpE protein homolog, mitochondrial (mge1) from Kluyveromyces lactis (strain ATCC 8585 / CBS 2359 / DSM 70799 / NBRC 1267 / NRRL Y-1140 / WM37) (Yeast).